Consider the following 63-residue polypeptide: Small ribosomal subunit protein eS31 (63 aa).

Zn(2+)-binding residues include Cys-31, Cys-34, Cys-50, and Cys-53. The C4-type zinc-finger motif lies at Cys-31–Cys-53.

Belongs to the eukaryotic ribosomal protein eS31 family. As to quaternary structure, part of the 30S ribosomal subunit. Requires Zn(2+) as cofactor.

This is Small ribosomal subunit protein eS31 from Sulfurisphaera tokodaii (strain DSM 16993 / JCM 10545 / NBRC 100140 / 7) (Sulfolobus tokodaii).